We begin with the raw amino-acid sequence, 359 residues long: Large ribosomal subunit protein bL27m (359 aa).

A mitochondrion-targeting transit peptide spans 1–24 (MSFWKVATLWQMPLRPSILVQVRT). The disordered stretch occupies residues 29–48 (AAGSRTSMKDSAGRRLGPKK). A compositionally biased stretch (basic and acidic residues) spans 35-48 (SMKDSAGRRLGPKK).

The protein belongs to the bacterial ribosomal protein bL27 family.

The protein localises to the mitochondrion. In terms of biological role, component of the large subunit of mitochondrial ribosome. The polypeptide is Large ribosomal subunit protein bL27m (MRPL2) (Eremothecium gossypii (strain ATCC 10895 / CBS 109.51 / FGSC 9923 / NRRL Y-1056) (Yeast)).